The chain runs to 224 residues: MTARAWASWRSSALLLLLVPGYFPLSHPMTVAGPVGGSLSVQCRYEKEHRTLNKFWCRPPQILRCDKIVETKGSAGKRNGRVSIRDSPANLSFTVTLENLTEEDAGTYWCGVDTPWLRDFHDPIVEVEVSVFPAGTTTASSPQSSMGTSGPPTKLPVHTWPSVTRKDSPEPSPHPGSLFSNVRFLLLVLLELPLLLSMLGAVLWVNRPQRSSRSRQNWPKGENQ.

A signal peptide spans 1–20 (MTARAWASWRSSALLLLLVP). The Extracellular portion of the chain corresponds to 21–183 (GYFPLSHPMT…HPGSLFSNVR (163 aa)). The Ig-like V-type domain occupies 22 to 130 (YFPLSHPMTV…HDPIVEVEVS (109 aa)). 2 cysteine pairs are disulfide-bonded: C43–C110 and C57–C65. N90 and N99 each carry an N-linked (GlcNAc...) asparagine glycan. Residues 136–151 (TTTASSPQSSMGTSGP) show a composition bias toward polar residues. The disordered stretch occupies residues 136–174 (TTTASSPQSSMGTSGPPTKLPVHTWPSVTRKDSPEPSPH). The chain crosses the membrane as a helical span at residues 184–204 (FLLLVLLELPLLLSMLGAVLW). The Cytoplasmic portion of the chain corresponds to 205-224 (VNRPQRSSRSRQNWPKGENQ).

Belongs to the CD300 family. In terms of tissue distribution, present on the surface of monocytes, neutrophils, a proportion of peripheral blood T- and B-lymphocytes and lymphocytic cell lines.

It is found in the cell membrane. The polypeptide is CMRF35-like molecule 6 (CD300C) (Homo sapiens (Human)).